A 116-amino-acid chain; its full sequence is Phosphoribosyl-AMP cyclohydrolase (116 aa).

D80 contributes to the Mg(2+) binding site. Position 81 (C81) interacts with Zn(2+). 2 residues coordinate Mg(2+): D82 and D84. Zn(2+)-binding residues include C98 and C105.

Belongs to the PRA-CH family. As to quaternary structure, homodimer. It depends on Mg(2+) as a cofactor. Zn(2+) is required as a cofactor.

Its subcellular location is the cytoplasm. It catalyses the reaction 1-(5-phospho-beta-D-ribosyl)-5'-AMP + H2O = 1-(5-phospho-beta-D-ribosyl)-5-[(5-phospho-beta-D-ribosylamino)methylideneamino]imidazole-4-carboxamide. The protein operates within amino-acid biosynthesis; L-histidine biosynthesis; L-histidine from 5-phospho-alpha-D-ribose 1-diphosphate: step 3/9. Functionally, catalyzes the hydrolysis of the adenine ring of phosphoribosyl-AMP. The sequence is that of Phosphoribosyl-AMP cyclohydrolase from Trichormus variabilis (strain ATCC 29413 / PCC 7937) (Anabaena variabilis).